Consider the following 450-residue polypeptide: Glucose-6-phosphate isomerase (450 aa).

A Phosphothreonine modification is found at T39. E291 (proton donor) is an active-site residue. Residues H312 and K426 contribute to the active site.

The protein belongs to the GPI family.

It is found in the cytoplasm. It carries out the reaction alpha-D-glucose 6-phosphate = beta-D-fructose 6-phosphate. The protein operates within carbohydrate biosynthesis; gluconeogenesis. Its pathway is carbohydrate degradation; glycolysis; D-glyceraldehyde 3-phosphate and glycerone phosphate from D-glucose: step 2/4. Its function is as follows. Catalyzes the reversible isomerization of glucose-6-phosphate to fructose-6-phosphate. This is Glucose-6-phosphate isomerase from Bacillus cereus (strain G9842).